The chain runs to 160 residues: Phosphopantetheine adenylyltransferase (160 aa).

Serine 9 is a binding site for substrate. Residues serine 9–phenylalanine 10 and histidine 17 contribute to the ATP site. Residues lysine 41, isoleucine 73, and lysine 87 each coordinate substrate. ATP is bound by residues glycine 88 to arginine 90, glutamate 98, and tyrosine 122 to serine 128.

It belongs to the bacterial CoaD family. In terms of assembly, homohexamer. Requires Mg(2+) as cofactor.

It localises to the cytoplasm. The catalysed reaction is (R)-4'-phosphopantetheine + ATP + H(+) = 3'-dephospho-CoA + diphosphate. Its pathway is cofactor biosynthesis; coenzyme A biosynthesis; CoA from (R)-pantothenate: step 4/5. Its function is as follows. Reversibly transfers an adenylyl group from ATP to 4'-phosphopantetheine, yielding dephospho-CoA (dPCoA) and pyrophosphate. The chain is Phosphopantetheine adenylyltransferase from Mycolicibacterium gilvum (strain PYR-GCK) (Mycobacterium gilvum (strain PYR-GCK)).